A 166-amino-acid polypeptide reads, in one-letter code: Phospholipase A2 inhibitor A1 (166 aa).

The signal sequence occupies residues 1 to 19; that stretch reads MRLILLSGLLLLGIFLANG. The C-type lectin domain occupies 46 to 161; the sequence is LKGSFLIVHK…CDDNLLVVCE (116 aa). Cystine bridges form between C83/C160 and C138/C152. N122 carries N-linked (GlcNAc...) asparagine glycosylation.

This sequence belongs to the alpha-type phospholipase A2 inhibitor family. In terms of assembly, homotrimer; non-covalently linked. As to expression, expressed by the liver.

Its subcellular location is the secreted. In terms of biological role, this phospholipase A2 inhibitor binds directly phospholipase A2 in the presence or absence of calcium. The sequence is that of Phospholipase A2 inhibitor A1 from Bothrops neuwiedi (Neuwied's lancehead).